The primary structure comprises 281 residues: Nucleotide-binding protein Tpet_1006 (281 aa).

G9–T16 contributes to the ATP binding site. Position 58–61 (D58–S61) interacts with GTP.

This sequence belongs to the RapZ-like family.

Its function is as follows. Displays ATPase and GTPase activities. The polypeptide is Nucleotide-binding protein Tpet_1006 (Thermotoga petrophila (strain ATCC BAA-488 / DSM 13995 / JCM 10881 / RKU-1)).